A 143-amino-acid chain; its full sequence is Nucleoside diphosphate kinase (143 aa).

Positions 11, 59, 87, 93, 104, and 114 each coordinate ATP. His-117 functions as the Pros-phosphohistidine intermediate in the catalytic mechanism.

This sequence belongs to the NDK family. In terms of assembly, homotetramer. The cofactor is Mg(2+).

It is found in the cytoplasm. It catalyses the reaction a 2'-deoxyribonucleoside 5'-diphosphate + ATP = a 2'-deoxyribonucleoside 5'-triphosphate + ADP. The enzyme catalyses a ribonucleoside 5'-diphosphate + ATP = a ribonucleoside 5'-triphosphate + ADP. Functionally, major role in the synthesis of nucleoside triphosphates other than ATP. The ATP gamma phosphate is transferred to the NDP beta phosphate via a ping-pong mechanism, using a phosphorylated active-site intermediate. This chain is Nucleoside diphosphate kinase, found in Shewanella denitrificans (strain OS217 / ATCC BAA-1090 / DSM 15013).